We begin with the raw amino-acid sequence, 61 residues long: Small ribosomal subunit protein uS14 (61 aa).

Zn(2+) is bound by residues cysteine 24, cysteine 27, cysteine 40, and cysteine 43.

Belongs to the universal ribosomal protein uS14 family. Zinc-binding uS14 subfamily. In terms of assembly, part of the 30S ribosomal subunit. Contacts proteins S3 and S10. Requires Zn(2+) as cofactor.

Functionally, binds 16S rRNA, required for the assembly of 30S particles and may also be responsible for determining the conformation of the 16S rRNA at the A site. The protein is Small ribosomal subunit protein uS14 of Trichlorobacter lovleyi (strain ATCC BAA-1151 / DSM 17278 / SZ) (Geobacter lovleyi).